A 298-amino-acid chain; its full sequence is Nucleotide-binding protein GTNG_3015 (298 aa).

17–24 (GMSGAGKT) provides a ligand contact to ATP. 68-71 (DLRS) serves as a coordination point for GTP.

This sequence belongs to the RapZ-like family.

Displays ATPase and GTPase activities. The protein is Nucleotide-binding protein GTNG_3015 of Geobacillus thermodenitrificans (strain NG80-2).